The primary structure comprises 252 residues: tRNA (guanine-N(1)-)-methyltransferase (252 aa).

Residues Gly113 and 133-138 (IGDYVL) contribute to the S-adenosyl-L-methionine site.

The protein belongs to the RNA methyltransferase TrmD family. Homodimer.

It is found in the cytoplasm. It carries out the reaction guanosine(37) in tRNA + S-adenosyl-L-methionine = N(1)-methylguanosine(37) in tRNA + S-adenosyl-L-homocysteine + H(+). Its function is as follows. Specifically methylates guanosine-37 in various tRNAs. This Xanthomonas campestris pv. campestris (strain B100) protein is tRNA (guanine-N(1)-)-methyltransferase.